The following is a 153-amino-acid chain: Large ribosomal subunit protein uL22 (153 aa).

The protein belongs to the universal ribosomal protein uL22 family. Part of the 50S ribosomal subunit.

In terms of biological role, this protein binds specifically to 23S rRNA. It makes multiple contacts with different domains of the 23S rRNA in the assembled 50S subunit and ribosome. The globular domain of the protein is located near the polypeptide exit tunnel on the outside of the subunit, while an extended beta-hairpin is found that lines the wall of the exit tunnel in the center of the 70S ribosome. The polypeptide is Large ribosomal subunit protein uL22 (Methanococcus maripaludis (strain C5 / ATCC BAA-1333)).